The primary structure comprises 472 residues: Ribulose bisphosphate carboxylase large chain (472 aa).

Positions 116 and 166 each coordinate substrate. The active-site Proton acceptor is the K168. K170 is a substrate binding site. Mg(2+)-binding residues include K194, D196, and E197. An N6-carboxylysine modification is found at K194. The active-site Proton acceptor is the H287. Substrate contacts are provided by R288, H320, and S372.

The protein belongs to the RuBisCO large chain family. Type I subfamily. Heterohexadecamer of 8 large chains and 8 small chains. It depends on Mg(2+) as a cofactor.

It carries out the reaction 2 (2R)-3-phosphoglycerate + 2 H(+) = D-ribulose 1,5-bisphosphate + CO2 + H2O. It catalyses the reaction D-ribulose 1,5-bisphosphate + O2 = 2-phosphoglycolate + (2R)-3-phosphoglycerate + 2 H(+). RuBisCO catalyzes two reactions: the carboxylation of D-ribulose 1,5-bisphosphate, the primary event in carbon dioxide fixation, as well as the oxidative fragmentation of the pentose substrate. Both reactions occur simultaneously and in competition at the same active site. The chain is Ribulose bisphosphate carboxylase large chain from Nitrobacter vulgaris.